Here is a 749-residue protein sequence, read N- to C-terminus: MAASVVKTPKCPRRGSAKEQQSKASPKSNNESNNWHWWILLASVFLITFATRFYKVTEPDHICWDETHFGKMGSWYINRTFFFDVHPPLGKMLIGLSGYLTGYNGTFPFEKPGDKYNETAYQGMRYFCTTLGALIMPMGFDTVYDLTRSHEAALLSAAYLIFDVGLLTLNQYILLDPILLFFMMGSVWGMVKISKATASGGSYSVRWWFWLFLTGTMLSCTISVKFVGLFVVLLVGLHTATELWLILGDLGQPIVETLKQIACRAIALILWPILLYTLFFYIHLSVLNRSGNGDGFYSSAFQSRLIGNSLYNASMPRDVAYGSVVTIKNHKTGGGYLHSHFHLYPKGSGARQQQITTYTHKDDNNKWVIKPHNKQRLPKDKLQLLRHGDLVRLEHLVTKRNLHSHSEPAPMTKKHLQVTGYGESGVGDANDVWRVLIVGGKVNETVHTVTSRLMLIHYLQNCALTSSGKQLPKWGFEQQEVSCNLNVRDKYAHWNVEDNEHKLLPSVSFSVYAPGFFARFLESHAVMLQGNAGLKPKEGEVTSRPWQWPINYRGQFFSGSSYRIYLLGNPVIWWSNLVFLALFVAVFLGNAILEQRRAGQARALVRSQADSEDSEPSTTDVPLCTCCPEEQQLLSRPREEHRDPLGAAAWLFVGWLLHYLPFWAMGRVLYFHHYFPALIFNSLLTGVMFHHIIQSLPRWIQHVLLGGLLSLIVYSFALFSPLAYGMSGPLANEPNSTMHSLKWLSTWEF.

The disordered stretch occupies residues 1-30 (MAASVVKTPKCPRRGSAKEQQSKASPKSNN). Residues 34-54 (NWHWWILLASVFLITFATRFY) traverse the membrane as a helical segment. Asparagine 78, asparagine 104, and asparagine 117 each carry an N-linked (GlcNAc...) asparagine glycan. 5 helical membrane-spanning segments follow: residues 126-146 (YFCT…VYDL), 173-193 (ILLD…MVKI), 204-224 (SVRW…TISV), 226-246 (FVGL…LWLI), and 266-286 (IALI…HLSV). Residues asparagine 288 and asparagine 312 are each glycosylated (N-linked (GlcNAc...) asparagine). MIR domains are found at residues 316–372 (PRDV…IKPH), 382–438 (LQLL…VLIV), and 443–499 (NETV…VEDN). Residue asparagine 443 is glycosylated (N-linked (GlcNAc...) asparagine). The next 4 helical transmembrane spans lie at 572-592 (IWWS…GNAI), 645-665 (LGAA…FWAM), 669-689 (LYFH…GVMF), and 703-723 (VLLG…SPLA). N-linked (GlcNAc...) asparagine glycosylation is present at asparagine 735.

It belongs to the glycosyltransferase 39 family. In terms of assembly, interacts with Rt/POMT1.

The protein localises to the endoplasmic reticulum membrane. The enzyme catalyses a di-trans,poly-cis-dolichyl beta-D-mannosyl phosphate + L-seryl-[protein] = 3-O-(alpha-D-mannosyl)-L-seryl-[protein] + a di-trans,poly-cis-dolichyl phosphate + H(+). The catalysed reaction is a di-trans,poly-cis-dolichyl beta-D-mannosyl phosphate + L-threonyl-[protein] = 3-O-(alpha-D-mannosyl)-L-threonyl-[protein] + a di-trans,poly-cis-dolichyl phosphate + H(+). It functions in the pathway protein modification; protein glycosylation. In terms of biological role, rt/POMT1 and tw/POMT2 function as a protein O-mannosyltransferase in association with each other to generate and maintain normal muscle development. This chain is Protein O-mannosyl-transferase 2, found in Drosophila pseudoobscura pseudoobscura (Fruit fly).